A 73-amino-acid polypeptide reads, in one-letter code: Lactogenin (73 aa).

Residue Gln-1 is modified to Pyrrolidone carboxylic acid.

This sequence belongs to the pancreatic ribonuclease family. In terms of tissue distribution, milk.

It localises to the secreted. In terms of biological role, secretory RNase specific towards pyrimidine bases, with higher activity towards poly C than poly U. Inhibits cell-free translation. The polypeptide is Lactogenin (Bos taurus (Bovine)).